The following is a 282-amino-acid chain: UPF0759 protein YunF (282 aa).

Belongs to the UPF0759 family.

This Bacillus subtilis (strain 168) protein is UPF0759 protein YunF (yunF).